A 60-amino-acid chain; its full sequence is Toxin TdNa2 (60 aa).

One can recognise an LCN-type CS-alpha/beta domain in the interval 1–59 (RDAYPADWRGCKPSCPWGSSSWCNEECTSLGGSSGYCAWPACWCYGLPDSVRYYNNKCH). Disulfide bonds link Cys11–Cys58, Cys15–Cys37, Cys23–Cys42, and Cys27–Cys44.

The protein belongs to the long (4 C-C) scorpion toxin superfamily. Sodium channel inhibitor family. Beta subfamily. As to expression, expressed by the venom gland.

The protein localises to the secreted. In terms of biological role, inhibits the sodium currents (Nav) in an apparent irreversible manner. Produces small depolarization and induces repetitive firing in squid axons. Is specific for arthropods (crickets, triatomides, crabs and squids), but is non-toxic to mice. The protein is Toxin TdNa2 of Tityus discrepans (Venezuelan scorpion).